We begin with the raw amino-acid sequence, 226 residues long: ATP synthase F(0) complex subunit a (226 aa).

The next 6 membrane-spanning stretches (helical) occupy residues 12–32 (PTMMGLPIVILIIMFPSILFP), 68–88 (WTLMLMSLILFIGSTNLLGLL), 97–117 (QLSMNLGMAIPLWAGTVFMGF), 135–155 (IFLIPMLVIIETISLFIQPMA), 164–184 (ITAGHLLIHLIGGATLALMDI), and 189–209 (ALITFIILILLTILEFAVAMI).

Belongs to the ATPase A chain family. As to quaternary structure, component of the ATP synthase complex composed at least of ATP5F1A/subunit alpha, ATP5F1B/subunit beta, ATP5MC1/subunit c (homooctomer), MT-ATP6/subunit a, MT-ATP8/subunit 8, ATP5ME/subunit e, ATP5MF/subunit f, ATP5MG/subunit g, ATP5MK/subunit k, ATP5MJ/subunit j, ATP5F1C/subunit gamma, ATP5F1D/subunit delta, ATP5F1E/subunit epsilon, ATP5PF/subunit F6, ATP5PB/subunit b, ATP5PD/subunit d, ATP5PO/subunit OSCP. ATP synthase complex consists of a soluble F(1) head domain (subunits alpha(3) and beta(3)) - the catalytic core - and a membrane F(0) domain - the membrane proton channel (subunits c, a, 8, e, f, g, k and j). These two domains are linked by a central stalk (subunits gamma, delta, and epsilon) rotating inside the F1 region and a stationary peripheral stalk (subunits F6, b, d, and OSCP). Interacts with DNAJC30; interaction is direct.

It localises to the mitochondrion inner membrane. It carries out the reaction H(+)(in) = H(+)(out). Functionally, subunit a, of the mitochondrial membrane ATP synthase complex (F(1)F(0) ATP synthase or Complex V) that produces ATP from ADP in the presence of a proton gradient across the membrane which is generated by electron transport complexes of the respiratory chain. ATP synthase complex consist of a soluble F(1) head domain - the catalytic core - and a membrane F(1) domain - the membrane proton channel. These two domains are linked by a central stalk rotating inside the F(1) region and a stationary peripheral stalk. During catalysis, ATP synthesis in the catalytic domain of F(1) is coupled via a rotary mechanism of the central stalk subunits to proton translocation. With the subunit c (ATP5MC1), forms the proton-conducting channel in the F(0) domain, that contains two crucial half-channels (inlet and outlet) that facilitate proton movement from the mitochondrial intermembrane space (IMS) into the matrix. Protons are taken up via the inlet half-channel and released through the outlet half-channel, following a Grotthuss mechanism. The sequence is that of ATP synthase F(0) complex subunit a from Equus asinus (Donkey).